The chain runs to 146 residues: Basic phospholipase A2 paradoxin-like alpha chain (146 aa).

The first 27 residues, 1–27 (MHPAHLLVLLAVCVSLLGASDIPPLPL), serve as a signal peptide directing secretion. 7 disulfide bridges follow: cysteine 38-cysteine 99, cysteine 54-cysteine 145, cysteine 56-cysteine 72, cysteine 71-cysteine 126, cysteine 78-cysteine 119, cysteine 88-cysteine 112, and cysteine 106-cysteine 117. Ca(2+) is bound by residues tyrosine 55, glycine 57, and glycine 59. Histidine 75 is an active-site residue. Aspartate 76 is a Ca(2+) binding site. Residue aspartate 120 is part of the active site.

The protein belongs to the phospholipase A2 family. Group I subfamily. D49 sub-subfamily. As to quaternary structure, heterotrimer of alpha, beta, and gamma chains; non-covalently linked. The cofactor is Ca(2+). Expressed by the venom gland.

It localises to the secreted. It carries out the reaction a 1,2-diacyl-sn-glycero-3-phosphocholine + H2O = a 1-acyl-sn-glycero-3-phosphocholine + a fatty acid + H(+). In terms of biological role, heterotrimer: Snake venom phospholipase A2 (PLA2) heterotrimer that acts as a potent presynaptic neurotoxin by blocking synaptic transmission and synaptic vesicle recycling. May act by binding in a calcium-dependent fashion to neurotonal pentraxin-1 (NPTX1) and neurotonal pentraxin-2 (NPTX2), but not to neuronal pentraxin receptor (NPTXR). Also binds to taipoxin-associated calcium binding protein 49 (RCN2), a protein localized in the lumen of endoplasmic reticulum. Monomer (alpha chain): Snake venom phospholipase A2 (PLA2) alpha chain that possesses the same high enzymatic activity than the heterotrimer. PLA2 catalyzes the calcium-dependent hydrolysis of the 2-acyl groups in 3-sn-phosphoglycerides. The chain is Basic phospholipase A2 paradoxin-like alpha chain from Oxyuranus microlepidotus (Inland taipan).